A 211-amino-acid polypeptide reads, in one-letter code: Protein GrpE (211 aa).

Positions 1 to 10 are enriched in basic and acidic residues; that stretch reads MTDDTKKPGP. Disordered regions lie at residues 1–37 and 187–211; these read MTDDTKKPGPDADVAEEFVDPAQAGEEQAETAEPDPV and AKGGPKAEPSASAEPGTSSLNEKDA. Positions 27 to 36 are enriched in acidic residues; the sequence is EQAETAEPDP. Positions 201-211 are enriched in polar residues; that stretch reads PGTSSLNEKDA.

Belongs to the GrpE family. As to quaternary structure, homodimer.

The protein localises to the cytoplasm. In terms of biological role, participates actively in the response to hyperosmotic and heat shock by preventing the aggregation of stress-denatured proteins, in association with DnaK and GrpE. It is the nucleotide exchange factor for DnaK and may function as a thermosensor. Unfolded proteins bind initially to DnaJ; upon interaction with the DnaJ-bound protein, DnaK hydrolyzes its bound ATP, resulting in the formation of a stable complex. GrpE releases ADP from DnaK; ATP binding to DnaK triggers the release of the substrate protein, thus completing the reaction cycle. Several rounds of ATP-dependent interactions between DnaJ, DnaK and GrpE are required for fully efficient folding. The protein is Protein GrpE of Agrobacterium fabrum (strain C58 / ATCC 33970) (Agrobacterium tumefaciens (strain C58)).